A 195-amino-acid chain; its full sequence is Large ribosomal subunit protein uL18 (195 aa).

This sequence belongs to the universal ribosomal protein uL18 family. In terms of assembly, part of the 50S ribosomal subunit. Contacts the 5S and 23S rRNAs.

In terms of biological role, this is one of the proteins that bind and probably mediate the attachment of the 5S RNA into the large ribosomal subunit, where it forms part of the central protuberance. The polypeptide is Large ribosomal subunit protein uL18 (Methanocaldococcus jannaschii (strain ATCC 43067 / DSM 2661 / JAL-1 / JCM 10045 / NBRC 100440) (Methanococcus jannaschii)).